The sequence spans 152 residues: ARL14 effector protein-like (152 aa).

The interval 1–21 is disordered; the sequence is MNEQSEKNNSIQERHTDHSFP.

This Homo sapiens (Human) protein is ARL14 effector protein-like (ARL14EPL).